The following is a 182-amino-acid chain: ATP-dependent protease subunit HslV (182 aa).

Threonine 12 is an active-site residue. Glycine 167, cysteine 170, and threonine 173 together coordinate Na(+).

The protein belongs to the peptidase T1B family. HslV subfamily. A double ring-shaped homohexamer of HslV is capped on each side by a ring-shaped HslU homohexamer. The assembly of the HslU/HslV complex is dependent on binding of ATP.

The protein resides in the cytoplasm. It carries out the reaction ATP-dependent cleavage of peptide bonds with broad specificity.. With respect to regulation, allosterically activated by HslU binding. Protease subunit of a proteasome-like degradation complex believed to be a general protein degrading machinery. This is ATP-dependent protease subunit HslV from Acidiphilium cryptum (strain JF-5).